Reading from the N-terminus, the 915-residue chain is Translation initiation factor IF-2 (915 aa).

Disordered regions lie at residues 1–105 and 121–295; these read MSEG…RALT and VEAA…RAAI. Over residues 57 to 81 the composition is skewed to low complexity; it reads PGTPSAPEGGSSSAPAPQSGNAPQG. Residues 84–101 show a composition bias toward gly residues; that stretch reads RSGGGNRGSGRGGAGGAG. Composition is skewed to basic and acidic residues over residues 121 to 135 and 143 to 180; these read VEAA…EQEK and EEAR…RKAA. Over residues 186 to 195 the composition is skewed to pro residues; that stretch reads AEAPPVPPPA. Composition is skewed to low complexity over residues 201-213 and 230-239; these read AAPS…SRTA and KVPVAAPSAP. A compositionally biased stretch (basic and acidic residues) spans 243–256; that stretch reads RLRERGDEGEEERK. Residues 266-278 are compositionally biased toward low complexity; sequence PAPRKAAAPVAKK. Positions 279-295 are enriched in basic and acidic residues; it reads AVAEPRRGGRIDVRAAI. The 171-residue stretch at 414-584 folds into the tr-type G domain; sequence PRPPVVTVMG…LLQAEVLDLK (171 aa). The G1 stretch occupies residues 423–430; it reads GHVDHGKT. 423 to 430 serves as a coordination point for GTP; the sequence is GHVDHGKT. Residues 448–452 are G2; it reads GITQH. The interval 470–473 is G3; it reads DTPG. GTP is bound by residues 470–474 and 524–527; these read DTPGH and NKCD. Positions 524–527 are G4; that stretch reads NKCD. The segment at 560 to 562 is G5; sequence SAL.

This sequence belongs to the TRAFAC class translation factor GTPase superfamily. Classic translation factor GTPase family. IF-2 subfamily.

Its subcellular location is the cytoplasm. One of the essential components for the initiation of protein synthesis. Protects formylmethionyl-tRNA from spontaneous hydrolysis and promotes its binding to the 30S ribosomal subunits. Also involved in the hydrolysis of GTP during the formation of the 70S ribosomal complex. This is Translation initiation factor IF-2 from Granulibacter bethesdensis (strain ATCC BAA-1260 / CGDNIH1).